The primary structure comprises 236 residues: ATP synthase subunit a, chloroplastic (236 aa).

Helical transmembrane passes span 25–45 (MHGQ…AFAV), 87–107 (FIGT…LIPW), 123–143 (DINT…YAGL), 180–202 (LFGN…PLVI), and 210–230 (GLFT…AYIG).

It belongs to the ATPase A chain family. In terms of assembly, F-type ATPases have 2 components, CF(1) - the catalytic core - and CF(0) - the membrane proton channel. CF(1) has five subunits: alpha(3), beta(3), gamma(1), delta(1), epsilon(1). CF(0) has four main subunits: a, b, b' and c.

Its subcellular location is the plastid. It localises to the chloroplast thylakoid membrane. Functionally, key component of the proton channel; it plays a direct role in the translocation of protons across the membrane. The protein is ATP synthase subunit a, chloroplastic of Ostreococcus tauri.